Reading from the N-terminus, the 381-residue chain is Pectin lyase 1 (381 aa).

A signal peptide spans 1–20 (MKYASFIAAAAAALASAVSA). Cystine bridges form between cysteine 83–cysteine 102 and cysteine 92–cysteine 227. N-linked (GlcNAc...) asparagine glycosylation occurs at asparagine 130. Arginine 257 is a catalytic residue. A disulfide bridge links cysteine 324 with cysteine 332.

It belongs to the polysaccharide lyase 1 family.

It is found in the secreted. It catalyses the reaction Eliminative cleavage of (1-&gt;4)-alpha-D-galacturonan methyl ester to give oligosaccharides with 4-deoxy-6-O-methyl-alpha-D-galact-4-enuronosyl groups at their non-reducing ends.. In terms of biological role, pectinolytic enzymes consist of four classes of enzymes: pectin lyase, polygalacturonase, pectin methylesterase and rhamnogalacturonase. Among pectinolytic enzymes, pectin lyase is the most important in depolymerization of pectin, since it cleaves internal glycosidic bonds of highly methylated pectins. The protein is Pectin lyase 1 (pel1) of Aspergillus oryzae (strain ATCC 42149 / RIB 40) (Yellow koji mold).